The following is a 549-amino-acid chain: SET and MYND domain-containing protein DDB_G0277331 (549 aa).

The 257-residue stretch at 27 to 283 folds into the SET domain; the sequence is KGIELRYCDG…KDEELFINYS (257 aa). Zn(2+) contacts are provided by C71, C74, C90, C93, C99, C103, H111, and C115. The segment at 71-115 adopts an MYND-type zinc-finger fold; sequence CDECLKNKLDLEEGKTLKRCSNCKLVYYCSTDCQTKAWKIHKQEC. A coiled-coil region spans residues 340 to 401; sequence NINNNNNNNN…IIKNLQNKLS (62 aa).

The protein belongs to the class V-like SAM-binding methyltransferase superfamily.

In terms of biological role, probable methyltransferase. The protein is SET and MYND domain-containing protein DDB_G0277331 of Dictyostelium discoideum (Social amoeba).